We begin with the raw amino-acid sequence, 459 residues long: Interleukin-1 receptor-associated kinase 4 (459 aa).

Met-1 is subject to N-acetylmethionine. One can recognise a Death domain in the interval 20 to 104 (RKLSDFIDPQ…APATLLLPDA (85 aa)). The residue at position 34 (Lys-34) is an N6-acetyllysine. The tract at residues 115–161 (REAATVAQTHGPCQEKDRTSVMPMPKLEHSCEPPDSSSPDNRSVESS) is disordered. Positions 186 to 454 (SAGGNRMGEG…PDIAKVQQLL (269 aa)) constitute a Protein kinase domain. ATP is bound by residues 192-200 (MGEGGFGVV) and Lys-213. The active-site Proton acceptor is Asp-311. ATP-binding positions include 313–316 (KSAN) and Asp-329. Phosphothreonine is present on residues Thr-342 and Thr-345. Ser-346 bears the Phosphoserine mark.

This sequence belongs to the protein kinase superfamily. TKL Ser/Thr protein kinase family. Pelle subfamily. In terms of assembly, associates with MYD88 and IRAK2 to form a ternary complex called the Myddosome. Once phosphorylated, IRAK4 dissociates from the receptor complex and then associates with the TNF receptor-associated factor 6 (TRAF6), IRAK1, and PELI1; this intermediate complex is required for subsequent NF-kappa-B activation. Direct binding of SMAD6 to PELI1 prevents complex formation and hence negatively regulates IL1R-TLR signaling and eventually NF-kappa-B-mediated gene expression. Interacts with IL1RL1. Interacts (when phosphorylated) with IRAK1. May interact (when phosphorylated) with IRAK3. It depends on Mg(2+) as a cofactor. Phosphorylated.

The protein resides in the cytoplasm. The catalysed reaction is L-seryl-[protein] + ATP = O-phospho-L-seryl-[protein] + ADP + H(+). It carries out the reaction L-threonyl-[protein] + ATP = O-phospho-L-threonyl-[protein] + ADP + H(+). Functionally, serine/threonine-protein kinase that plays a critical role in initiating innate immune response against foreign pathogens. Involved in Toll-like receptor (TLR) and IL-1R signaling pathways. Is rapidly recruited by MYD88 to the receptor-signaling complex upon TLR activation to form the Myddosome together with IRAK2. Phosphorylates initially IRAK1, thus stimulating the kinase activity and intensive autophosphorylation of IRAK1. Phosphorylates E3 ubiquitin ligases Pellino proteins (PELI1, PELI2 and PELI3) to promote pellino-mediated polyubiquitination of IRAK1. Then, the ubiquitin-binding domain of IKBKG/NEMO binds to polyubiquitinated IRAK1 bringing together the IRAK1-MAP3K7/TAK1-TRAF6 complex and the NEMO-IKKA-IKKB complex. In turn, MAP3K7/TAK1 activates IKKs (CHUK/IKKA and IKBKB/IKKB) leading to NF-kappa-B nuclear translocation and activation. Alternatively, phosphorylates TIRAP to promote its ubiquitination and subsequent degradation. Phosphorylates NCF1 and regulates NADPH oxidase activation after LPS stimulation suggesting a similar mechanism during microbial infections. The polypeptide is Interleukin-1 receptor-associated kinase 4 (Irak4) (Mus musculus (Mouse)).